We begin with the raw amino-acid sequence, 365 residues long: Outer capsid protein sigma-3 (365 aa).

The CCHC-type zinc finger occupies 51-73 (CMHCLGVVGSLQRKLKHLPHHKC).

This sequence belongs to the orthoreovirus sigma-3 protein family. As to quaternary structure, heterohexamer of three sigma-3 and three Mu-1 proteins. The RNA-binding form is probably a homodimer. In terms of processing, cleaved during virus the endosomal proteolytic disassembly of the outer capsid.

Its subcellular location is the virion. The protein localises to the host cytoplasm. It localises to the host nucleus. Its function is as follows. Stimulates translation by blocking the activation of the dsRNA-dependent protein kinase EIF2AK2/PKR, thereby inhibiting the host interferon response. Sigma3 prevents the activation of EIF2AK2 by competing with the kinase for dsRNA-binding. Functionally, the viral outer shell polypeptides, of which sigma-3 is one, impose structural constraints that prevent elongation of nascent transcripts by the RNA-dependent RNA polymerase lambda-3. This Mammalia (T2J) protein is Outer capsid protein sigma-3 (S4).